A 232-amino-acid chain; its full sequence is Phosphoribosylaminoimidazole-succinocarboxamide synthase (232 aa).

This sequence belongs to the SAICAR synthetase family.

The enzyme catalyses 5-amino-1-(5-phospho-D-ribosyl)imidazole-4-carboxylate + L-aspartate + ATP = (2S)-2-[5-amino-1-(5-phospho-beta-D-ribosyl)imidazole-4-carboxamido]succinate + ADP + phosphate + 2 H(+). It participates in purine metabolism; IMP biosynthesis via de novo pathway; 5-amino-1-(5-phospho-D-ribosyl)imidazole-4-carboxamide from 5-amino-1-(5-phospho-D-ribosyl)imidazole-4-carboxylate: step 1/2. This Finegoldia magna (strain ATCC 29328 / DSM 20472 / WAL 2508) (Peptostreptococcus magnus) protein is Phosphoribosylaminoimidazole-succinocarboxamide synthase.